We begin with the raw amino-acid sequence, 505 residues long: Glutamyl-tRNA(Gln) amidotransferase subunit A (505 aa).

Active-site charge relay system residues include K80 and S155. S179 functions as the Acyl-ester intermediate in the catalytic mechanism.

The protein belongs to the amidase family. GatA subfamily. Heterotrimer of A, B and C subunits.

The catalysed reaction is L-glutamyl-tRNA(Gln) + L-glutamine + ATP + H2O = L-glutaminyl-tRNA(Gln) + L-glutamate + ADP + phosphate + H(+). In terms of biological role, allows the formation of correctly charged Gln-tRNA(Gln) through the transamidation of misacylated Glu-tRNA(Gln) in organisms which lack glutaminyl-tRNA synthetase. The reaction takes place in the presence of glutamine and ATP through an activated gamma-phospho-Glu-tRNA(Gln). In Acidothermus cellulolyticus (strain ATCC 43068 / DSM 8971 / 11B), this protein is Glutamyl-tRNA(Gln) amidotransferase subunit A.